The chain runs to 73 residues: EAGEECDCGSPENPCCDAATCKLRPGAQCADGLCCDQCRFMKKGTVCRVAKGDWNDDTCTGQSADCPRNGLYG.

A Disintegrin domain is found at 1–73; it reads EAGEECDCGS…ADCPRNGLYG (73 aa). 6 disulfide bridges follow: C6-C21, C8-C16, C15-C38, C29-C35, C34-C59, and C47-C66. Residues 51 to 53 carry the Cell attachment site; atypical (KGD) motif; sequence KGD.

It belongs to the venom metalloproteinase (M12B) family. P-II subfamily. P-IIa sub-subfamily. In terms of assembly, monomer. As to expression, expressed by the venom gland.

Its subcellular location is the secreted. Its function is as follows. Inhibitor of ligand binding to the integrins alpha-IIb/beta-3 (ITGA2B/ITGB3). Competition with fibrinogen for the RGD recognition sites on the alpha-IIb/beta-3 integrin results in the inhibition of platelet aggregation induced by ADP, thrombin, platelet-activating factor and collagen. This is Disintegrin barbourin from Sistrurus miliarius barbouri (Dusky pigmy rattlesnake).